The chain runs to 218 residues: Glutathione S-transferase Mu 2 (218 aa).

Residues 2–88 form the GST N-terminal domain; that stretch reads PMTLGYWDIR…YLGRKHNLCG (87 aa). 7–8 is a glutathione binding site; that stretch reads YW. Residues Ser-27 and Ser-44 each carry the phosphoserine modification. Residues 43-46, Lys-50, 59-60, and 72-73 contribute to the glutathione site; these read RSQW, NL, and QS. The 125-residue stretch at 90-214 folds into the GST C-terminal domain; the sequence is TEEERIRVDV…SKPIFAKMAF (125 aa). Tyr-116 provides a ligand contact to substrate. Ser-117 carries the phosphoserine modification.

This sequence belongs to the GST superfamily. Mu family. In terms of assembly, homodimer or heterodimer.

The protein localises to the cytoplasm. The catalysed reaction is RX + glutathione = an S-substituted glutathione + a halide anion + H(+). The enzyme catalyses 11(S)-hydroxy-14(S),15(S)-epoxy-(5Z,8Z,12E)-eicosatrienoate + glutathione = (11S,15S)-dihydroxy-14(R)-S-glutathionyl-(5Z,8Z,12E)-eicosatrienoate. Its function is as follows. Conjugation of reduced glutathione to a wide number of exogenous and endogenous hydrophobic electrophiles. Participates in the formation of novel hepoxilin regioisomers. This chain is Glutathione S-transferase Mu 2, found in Rattus norvegicus (Rat).